Consider the following 216-residue polypeptide: Probable GTP-binding protein EngB (216 aa).

The EngB-type G domain maps to 27-201; it reads GGVEIAFAGR…AQTLTGWYLA (175 aa). GTP is bound by residues 35–42, 62–66, 80–83, 147–150, and 180–182; these read GRSNAGKS, GRTQL, DLPG, TKAD, and FSS. 2 residues coordinate Mg(2+): Ser-42 and Thr-64.

It belongs to the TRAFAC class TrmE-Era-EngA-EngB-Septin-like GTPase superfamily. EngB GTPase family. The cofactor is Mg(2+).

Necessary for normal cell division and for the maintenance of normal septation. The sequence is that of Probable GTP-binding protein EngB from Aeromonas hydrophila subsp. hydrophila (strain ATCC 7966 / DSM 30187 / BCRC 13018 / CCUG 14551 / JCM 1027 / KCTC 2358 / NCIMB 9240 / NCTC 8049).